The primary structure comprises 122 residues: Defensin-like protein 181 (122 aa).

The first 26 residues, 1–26, serve as a signal peptide directing secretion; that stretch reads MERIPSLASLVSLLIIFATVVNQTRA. 8 cysteine pairs are disulfide-bonded: C29/C70, C36/C55, C39/C64, C43/C66, C76/C122, C87/C107, C92/C116, and C96/C118.

Belongs to the DEFL family.

Its subcellular location is the secreted. Functionally, confers broad-spectrum resistance to pathogens. In Arabidopsis thaliana (Mouse-ear cress), this protein is Defensin-like protein 181 (PDF3.1).